Reading from the N-terminus, the 404-residue chain is Interferon-activable protein 205-A (404 aa).

The Pyrin domain maps to 1-88 (MENEYKRLVL…AEILKKERSE (88 aa)). Residues 85–198 (ERSEVTEETS…KSQPQNQNIP (114 aa)) are disordered. 2 stretches are compositionally biased toward low complexity: residues 102 to 112 (ASPATPTSTTS) and 122 to 132 (TSTTQEETSTA). A compositionally biased stretch (basic and acidic residues) spans 137-147 (GMSEEKTDVKK). The segment covering 168–185 (QSPISQVSSSASSNIPSA) has biased composition (low complexity). Positions 186–197 (KNQKSQPQNQNI) are enriched in polar residues. Residues 192-392 (PQNQNIPRGA…CGDHSFVKVT (201 aa)) enclose the HIN-200 domain.

Belongs to the HIN-200 family.

Its subcellular location is the nucleus. In terms of biological role, may act as a transcriptional regulator in the myeloid lineage. Inhibits cell growth via p53/TP53 and RB1-dependent and independent pathways. In Mus musculus (Mouse), this protein is Interferon-activable protein 205-A (Ifi205a).